The following is a 343-amino-acid chain: E3 ubiquitin-protein ligase RNF113A (343 aa).

Position 2 is an N-acetylalanine (alanine 2). The tract at residues 2–60 (AEQLSPGKTTDQVCTFLFKKPGRKVAAGRRKRPICNQESGDSSSSSDEGNTVVRPEKKR) is important for interaction with SNRNP200/BRR2. Serine 6 carries the post-translational modification Phosphoserine. The span at 23–34 (GRKVAAGRRKRP) shows a compositional bias: basic residues. Residues 23–95 (GRKVAAGRRK…EEEEENKSES (73 aa)) are disordered. A compositionally biased stretch (low complexity) spans 39–50 (ESGDSSSSSDEG). The important for interaction with CXCR4 stretch occupies residues 50 to 61 (GNTVVRPEKKRA). A phosphoserine mark is found at serine 84 and serine 85. The C3H1-type zinc-finger motif lies at 196–224 (DYQPDICKDYKETGFCGFGDSCKFLHDRS). Serine 253 is subject to Phosphoserine. The RING-type zinc finger occupies 262–300 (CFICRQTFQNPVVTKCRHYFCESCALQHFRTTPRCYVCD). The segment at 323-343 (AEGGGASGFPEDPDEDPVPIT) is disordered. The segment covering 333-343 (EDPDEDPVPIT) has biased composition (acidic residues).

Component of pre-catalytic and catalytic spliceosome complexes. Interacts (via N-terminus) with the spliceosome subunit SNRNP200/BRR2. Component of the minor spliceosome. Within this complex, interacts with SCNM1 and CRIPT.

The protein localises to the nucleus. The protein resides in the nucleus speckle. The catalysed reaction is S-ubiquitinyl-[E2 ubiquitin-conjugating enzyme]-L-cysteine + [acceptor protein]-L-lysine = [E2 ubiquitin-conjugating enzyme]-L-cysteine + N(6)-ubiquitinyl-[acceptor protein]-L-lysine.. Its pathway is protein modification; protein ubiquitination. Required for pre-mRNA splicing as component of the spliceosome. As a component of the minor spliceosome, involved in the splicing of U12-type introns in pre-mRNAs. E3 ubiquitin-protein ligase that catalyzes the transfer of ubiquitin onto target proteins. Catalyzes polyubiquitination of SNRNP200/BRR2 with non-canonical 'Lys-63'-linked polyubiquitin chains. Plays a role in DNA repair via its role in the synthesis of 'Lys-63'-linked polyubiquitin chains that recruit ALKBH3 and the ASCC complex to sites of DNA damage by alkylating agents. Ubiquitinates CXCR4, leading to its degradation, and thereby contributes to the termination of CXCR4 signaling. The polypeptide is E3 ubiquitin-protein ligase RNF113A (RNF113A) (Bos taurus (Bovine)).